The following is a 76-amino-acid chain: Small ribosomal subunit protein bS18 (76 aa).

This sequence belongs to the bacterial ribosomal protein bS18 family. Part of the 30S ribosomal subunit. Forms a tight heterodimer with protein bS6.

Functionally, binds as a heterodimer with protein bS6 to the central domain of the 16S rRNA, where it helps stabilize the platform of the 30S subunit. This Stenotrophomonas maltophilia (strain R551-3) protein is Small ribosomal subunit protein bS18.